The following is a 330-amino-acid chain: GTP 3',8-cyclase (330 aa).

One can recognise a Radical SAM core domain in the interval 9 to 225 (RFGRTVNYVR…IRRHHELIPA (217 aa)). Arginine 18 is a binding site for GTP. [4Fe-4S] cluster contacts are provided by cysteine 25 and cysteine 29. Position 31 (tyrosine 31) interacts with S-adenosyl-L-methionine. Cysteine 32 is a binding site for [4Fe-4S] cluster. Arginine 67 contributes to the GTP binding site. Glycine 71 is a binding site for S-adenosyl-L-methionine. Threonine 97 lines the GTP pocket. Serine 121 serves as a coordination point for S-adenosyl-L-methionine. Residue lysine 158 participates in GTP binding. Methionine 192 contributes to the S-adenosyl-L-methionine binding site. Residues cysteine 256 and cysteine 259 each coordinate [4Fe-4S] cluster. 261-263 (RVR) lines the GTP pocket. Residue cysteine 273 coordinates [4Fe-4S] cluster.

It belongs to the radical SAM superfamily. MoaA family. Monomer and homodimer. The cofactor is [4Fe-4S] cluster.

It carries out the reaction GTP + AH2 + S-adenosyl-L-methionine = (8S)-3',8-cyclo-7,8-dihydroguanosine 5'-triphosphate + 5'-deoxyadenosine + L-methionine + A + H(+). It functions in the pathway cofactor biosynthesis; molybdopterin biosynthesis. Functionally, catalyzes the cyclization of GTP to (8S)-3',8-cyclo-7,8-dihydroguanosine 5'-triphosphate. This Marinobacter nauticus (strain ATCC 700491 / DSM 11845 / VT8) (Marinobacter aquaeolei) protein is GTP 3',8-cyclase.